The chain runs to 51 residues: Ribosomal protein eL39-like 2 (51 aa).

The protein belongs to the eukaryotic ribosomal protein eL39 family. In terms of assembly, component of a male germ cell-specific 60S large ribosomal subunit (LSU), which contains RPL10L and RPL39L, instead of RPL10 and RPL39 paralogs. The composition of the rest of the complex is similar to classical ribosomes. In terms of tissue distribution, testis specific.

The protein localises to the cytoplasm. Its function is as follows. Male germ cell-specific component of the ribosome, which is required for the formation of sperm and male fertility. Replaces the RPL39 paralog in the ribosome of male germ cells. The ribosome is a large ribonucleoprotein complex responsible for the synthesis of proteins in the cell. The male germ cell-specific ribosome displays a ribosomal polypeptide exit tunnel of distinct size and charge states compared with the classical ribosome. It is responsible for regulating the biosynthesis and folding of a subset of male germ-cell-specific proteins that are essential for the formation of sperm. The chain is Ribosomal protein eL39-like 2 from Homo sapiens (Human).